Reading from the N-terminus, the 375-residue chain is Succinyl-diaminopimelate desuccinylase (375 aa).

His66 is a Zn(2+) binding site. Asp68 is an active-site residue. Asp99 contributes to the Zn(2+) binding site. The Proton acceptor role is filled by Glu133. Zn(2+) contacts are provided by Glu134, Glu162, and His348.

Belongs to the peptidase M20A family. DapE subfamily. In terms of assembly, homodimer. Zn(2+) serves as cofactor. It depends on Co(2+) as a cofactor.

It catalyses the reaction N-succinyl-(2S,6S)-2,6-diaminopimelate + H2O = (2S,6S)-2,6-diaminopimelate + succinate. The protein operates within amino-acid biosynthesis; L-lysine biosynthesis via DAP pathway; LL-2,6-diaminopimelate from (S)-tetrahydrodipicolinate (succinylase route): step 3/3. In terms of biological role, catalyzes the hydrolysis of N-succinyl-L,L-diaminopimelic acid (SDAP), forming succinate and LL-2,6-diaminopimelate (DAP), an intermediate involved in the bacterial biosynthesis of lysine and meso-diaminopimelic acid, an essential component of bacterial cell walls. The protein is Succinyl-diaminopimelate desuccinylase of Salmonella typhi.